The following is a 153-amino-acid chain: Aspartate carbamoyltransferase regulatory chain (153 aa).

Cys-109, Cys-114, Cys-138, and Cys-141 together coordinate Zn(2+).

This sequence belongs to the PyrI family. Contains catalytic and regulatory chains. It depends on Zn(2+) as a cofactor.

Functionally, involved in allosteric regulation of aspartate carbamoyltransferase. The protein is Aspartate carbamoyltransferase regulatory chain of Salmonella schwarzengrund (strain CVM19633).